The following is a 231-amino-acid chain: MRINEHSIQSLPKEERPRERLIRHGADSLSLIEILAIILGSGSKVASVLEVSRALVTRFGGLEALMQATLTELLEVQGIGFAKAIQLKAALNLGFRATRQQIKSRYLIEHSSHAYQLVKDELENENREIFMAIFQDTKGYLITYEVISIGSLSQTLVHPREVFYSAIRHKAASLIVVHNHPSGDPMPSNQDLKLTQILLEGSRLLGIPLRDHLIIGKNSYVSFKDQNLLLK.

Residues 107–229 (LIEHSSHAYQ…YVSFKDQNLL (123 aa)) enclose the MPN domain. Residues histidine 178, histidine 180, and aspartate 191 each coordinate Zn(2+). The short motif at 178-191 (HNHPSGDPMPSNQD) is the JAMM motif element.

Belongs to the UPF0758 family.

This is UPF0758 protein pc1765 from Protochlamydia amoebophila (strain UWE25).